We begin with the raw amino-acid sequence, 446 residues long: F-box/LRR-repeat protein At4g29420 (446 aa).

The region spanning 1–51 (MDELPPELWIKILSRINDSESLARCRVASKTLNSLSREVRAVNLICTWSRY) is the F-box domain. LRR repeat units follow at residues 59 to 84 (VVTP…SVGV), 103 to 130 (DLYL…SISD), 135 to 160 (SCWR…EVKN), 181 to 206 (FIRL…NLIG), 223 to 248 (CHWT…KLKC), 265 to 289 (HLSV…ELVS), 318 to 343 (QSER…SLSP), and 382 to 407 (NVHQ…RLMI).

This is F-box/LRR-repeat protein At4g29420 from Arabidopsis thaliana (Mouse-ear cress).